Here is a 307-residue protein sequence, read N- to C-terminus: MTEQRLISELEQLVSEGRNPNTMHIDLLPTFDILREINYEDQTVPTAVEKVIPAIAAAVNQIVAAFQKGGRLIYMGAGTSGRLGVLDASECPPTFSVPSDMVIGLIAGGPEALQNSIEGAEDDPEQGRQALQDIKLTSTDVVVGIAVSGRTPYVIGGLNYAKSIGAVTIALSCNPNSIIAGIADLAISPVVGPEILTGSTRLKSGTAQKLILNMLTTASMIRIGKSYQNLMVDVHASNKKLVARAIRIVMQATGCTQADARRVLDQTGNDVKLAILMEITGMGIEEARAALQNAGGFLRKAISAKTA.

Positions 62–225 constitute an SIS domain; the sequence is IVAAFQKGGR…TTASMIRIGK (164 aa). Glu90 functions as the Proton donor in the catalytic mechanism. Residue Glu121 is part of the active site.

This sequence belongs to the GCKR-like family. MurNAc-6-P etherase subfamily. Homodimer.

The enzyme catalyses N-acetyl-D-muramate 6-phosphate + H2O = N-acetyl-D-glucosamine 6-phosphate + (R)-lactate. The protein operates within amino-sugar metabolism; 1,6-anhydro-N-acetylmuramate degradation. It functions in the pathway amino-sugar metabolism; N-acetylmuramate degradation. It participates in cell wall biogenesis; peptidoglycan recycling. In terms of biological role, specifically catalyzes the cleavage of the D-lactyl ether substituent of MurNAc 6-phosphate, producing GlcNAc 6-phosphate and D-lactate. Together with AnmK, is also required for the utilization of anhydro-N-acetylmuramic acid (anhMurNAc) either imported from the medium or derived from its own cell wall murein, and thus plays a role in cell wall recycling. This is N-acetylmuramic acid 6-phosphate etherase from Rhizobium rhizogenes (strain K84 / ATCC BAA-868) (Agrobacterium radiobacter).